Consider the following 180-residue polypeptide: Ribulose bisphosphate carboxylase small subunit, chloroplastic 2 (180 aa).

The N-terminal 54 residues, 1–54, are a transit peptide targeting the chloroplast; sequence MASMMSNAAVVGRTTPAQASMVAPFTGLKSVSAFPVTKKSNDITSIASNGGRVQ.

The protein belongs to the RuBisCO small chain family. As to quaternary structure, heterohexadecamer of 8 large and 8 small subunits.

It localises to the plastid. It is found in the chloroplast. Functionally, ruBisCO catalyzes two reactions: the carboxylation of D-ribulose 1,5-bisphosphate, the primary event in carbon dioxide fixation, as well as the oxidative fragmentation of the pentose substrate. Both reactions occur simultaneously and in competition at the same active site. Although the small subunit is not catalytic it is essential for maximal activity. This Mesembryanthemum crystallinum (Common ice plant) protein is Ribulose bisphosphate carboxylase small subunit, chloroplastic 2.